The primary structure comprises 777 residues: Rho guanine nucleotide exchange factor 38 (777 aa).

Thr34 bears the Phosphothreonine mark. Residues 35–72 form a disordered region; it reads DTVVESSVSGDHSGTLRRSQSDRTEYNQKLQEKMTPQG. Residues 37–52 are compositionally biased toward polar residues; it reads VVESSVSGDHSGTLRR. Residues 53-66 show a composition bias toward basic and acidic residues; it reads SQSDRTEYNQKLQE. The 192-residue stretch at 94 to 285 folds into the DH domain; that stretch reads KREKIIKELI…KDINVNINEL (192 aa). In terms of domain architecture, BAR spans 327-536; that stretch reads LKILTRGESQ…QNQVLEEIQN (210 aa). In terms of domain architecture, SH3 1 spans 582–645; it reads SAEELYQAKR…YSSFLKPYNP (64 aa). The interval 673 to 694 is disordered; that stretch reads PASDSVTGTSESSIGDSSSSLS. The span at 679–694 shows a compositional bias: low complexity; that stretch reads TGTSESSIGDSSSSLS. Positions 713 to 776 constitute an SH3 2 domain; it reads VDEQIFYAVH…PANYLGKMTY (64 aa).

Functionally, may act as a guanine-nucleotide releasing factor. The polypeptide is Rho guanine nucleotide exchange factor 38 (ARHGEF38) (Homo sapiens (Human)).